The sequence spans 309 residues: Gamma-hemolysin component A (309 aa).

A signal peptide spans 1-29 (MIKNKILTATLAVGLIAPLANPFIEISKA).

Belongs to the aerolysin family. In terms of assembly, toxicity requires sequential binding and synergistic association of a class S and a class F component which form heterooligomeric complexes. HlgA (class S) associates with HlgB (class F) thus forming an AB toxin in strains producing both gamma-hemolysins and leukocidins. HlgA and LukF-PV can also form a complex.

Its subcellular location is the secreted. In terms of biological role, toxin that seems to act by forming pores in the membrane of the cell. Has a hemolytic and a leucotoxic activity. This is Gamma-hemolysin component A (hlgA) from Staphylococcus aureus (strain MRSA252).